Consider the following 91-residue polypeptide: MNDQNERRLETLSGQVSSLKNVTYDIYSRANDYTRIDRATESFSGLSNSVKKSTENFFRVVRSAGRRRIMTMVLAIVGSILIIYYASKWFF.

Over 1 to 68 the chain is Cytoplasmic; it reads MNDQNERRLE…RVVRSAGRRR (68 aa). A helical; Anchor for type IV membrane protein transmembrane segment spans residues 69–86; that stretch reads IMTMVLAIVGSILIIYYA. Residues 87–91 lie on the Lumenal side of the membrane; that stretch reads SKWFF.

Component of a SNARE complex consisting of sed5, gos1, ykt6 and sft1.

Its subcellular location is the golgi apparatus membrane. In terms of biological role, vesicle SNARE required for retrograde transport within the Golgi complex. The polypeptide is Protein transport protein sft1 (sft1) (Schizosaccharomyces pombe (strain 972 / ATCC 24843) (Fission yeast)).